The sequence spans 60 residues: Large ribosomal subunit protein uL30 (60 aa).

Belongs to the universal ribosomal protein uL30 family. Part of the 50S ribosomal subunit.

In Salinispora tropica (strain ATCC BAA-916 / DSM 44818 / JCM 13857 / NBRC 105044 / CNB-440), this protein is Large ribosomal subunit protein uL30.